Consider the following 568-residue polypeptide: MAGUK p55 subfamily member 3 (568 aa).

2 consecutive L27 domains span residues 6 to 60 and 61 to 118; these read EDSG…ERQS and PTPV…FDPV. In terms of domain architecture, PDZ spans 137-218; it reads IVRLVKNKEP…SITLKIIPAT (82 aa). Residues 226–296 enclose the SH3 domain; that stretch reads DSKVFMRALF…PSKQFQERRL (71 aa). At serine 307 the chain carries Phosphoserine. A Guanylate kinase-like domain is found at 385–568; that stretch reads PRLVVLIGSL…QEPAASSELS (184 aa).

This sequence belongs to the MAGUK family. Interacts with HTR2C; this interaction stabilizes the receptor at the plasma membrane and prevents the desensitization of the HTR2C receptor-mediated calcium response. Interacts with HTR2A. Interacts with HTR4. Interacts (via PDZ domain) with CADM1 (via C-terminus)Interacts (via PDZ domain) with CADM1; this interaction connects CADM1 with DLG1. Interacts (via Guanylate kinase-like domain) with PALS1. Interacts with DLG1 (via N-terminus); this interaction connects CADM1 with DLG1 and links CADM1 with the regulatory subunit of phosphoinositide-3-kinase (PI3K) by forming a multiprotein complex and participates in cell spreading. Expressed in brain, skeletal muscle, testis, kidney, and lung.

It localises to the apical cell membrane. The protein localises to the cell membrane. Its subcellular location is the cell junction. The protein resides in the adherens junction. Participates in cell spreading through the phosphoinositide-3-kinase (PI3K) pathway by connecting CADM1 to DLG1 and the regulatory subunit of phosphoinositide-3-kinase (PI3K). Stabilizes HTR2C at the plasma membrane and prevents its desensitization. May participates in the maintenance of adherens junctions. The chain is MAGUK p55 subfamily member 3 from Mus musculus (Mouse).